The chain runs to 61 residues: Large ribosomal subunit protein bL32 (61 aa).

Belongs to the bacterial ribosomal protein bL32 family.

This is Large ribosomal subunit protein bL32 from Syntrophus aciditrophicus (strain SB).